We begin with the raw amino-acid sequence, 205 residues long: Adenylyl-sulfate kinase (205 aa).

31-38 (GLSGAGKS) is a binding site for ATP. The active-site Phosphoserine intermediate is Ser105.

This sequence belongs to the APS kinase family.

It carries out the reaction adenosine 5'-phosphosulfate + ATP = 3'-phosphoadenylyl sulfate + ADP + H(+). The protein operates within sulfur metabolism; hydrogen sulfide biosynthesis; sulfite from sulfate: step 2/3. Functionally, catalyzes the synthesis of activated sulfate. The sequence is that of Adenylyl-sulfate kinase from Shewanella putrefaciens (strain CN-32 / ATCC BAA-453).